A 461-amino-acid chain; its full sequence is MPPSGPRGTLLLLPLLLLLLLRAVLAVPLERGAPNKEETPATESPDTGLYYHRYLQEVIDVLETDGHFREKLQAANAEDIKSGKLSRELDFVSHHVRTKLDELKRQEVSRLRMLLKAKMDAEQDPNVQVDHLNLLKQFEHLDPQNQHTFEARDLELLIQTATRDLAQYDAAHHEEFKRYEMLKEHERRRYLESLGEEQRKEAERKLEEQQRRHREHPKVNVPGSQAQLKEVWEELDGLDPNRFNPKTFFILHDINSDGVLDEQELEALFTKELEKVYDPKNEEDDMREMEEERLRMREHVMKNVDTNQDRLVTLEEFLASTQRKEFGDTGEGWETVEMHPAYTEEELRRFEEELAAREAELNAKAQRLSQETEALGRSQGRLEAQKRELQQAVLHMEQRKQQQQQQQGHKAPAAHPEGQLKFHPDTDDVPVPAPAGDQKEVDTSEKKLLERLPEVEVPQHL.

A signal peptide spans 1–26 (MPPSGPRGTLLLLPLLLLLLLRAVLA). The segment at 42-51 (TESPDTGLYY) is O-glycosylated at one site. At serine 86 the chain carries Phosphoserine; by FAM20C. A Phosphothreonine; by FAM20C modification is found at threonine 148. Positions 150–218 (EARDLELLIQ…QQRRHREHPK (69 aa)) form a coiled coil. Residues 172–218 (HHEEFKRYEMLKEHERRRYLESLGEEQRKEAERKLEEQQRRHREHPK) mediate DNA binding. Positions 193–210 (SLGEEQRKEAERKLEEQQ) are enriched in basic and acidic residues. Positions 193-221 (SLGEEQRKEAERKLEEQQRRHREHPKVNV) are disordered. The interval 228–321 (LKEVWEELDG…VTLEEFLAST (94 aa)) is binds to GNAI2 and GNAI3. 2 EF-hand domains span residues 240 to 275 (PNRF…ELEK) and 292 to 327 (ERLR…KEFG). Ca(2+)-binding residues include aspartate 253, asparagine 255, aspartate 257, glutamate 264, aspartate 305, asparagine 307, aspartate 309, and glutamate 316. The GBA motif lies at 303–333 (NVDTNQDRLVTLEEFLASTQRKEFGDTGEGW). The stretch at 341–407 (AYTEEELRRF…QRKQQQQQQQ (67 aa)) forms a coiled coil. The segment at 368 to 461 (LSQETEALGR…LPEVEVPQHL (94 aa)) is disordered. Serine 369 bears the Phosphoserine; by FAM20C mark. Basic and acidic residues predominate over residues 437 to 461 (DQKEVDTSEKKLLERLPEVEVPQHL).

It belongs to the nucleobindin family. Interacts (via GBA motif) with guanine nucleotide-binding protein G(i) alpha subunits GNAI1, GNAI2 and GNAI3 with higher affinity for GNAI1 and GNAI3 than for GNAI2. Preferentially interacts with inactive rather than active GNAI3. Interaction with GNAI3 is inhibited when NUCB1 binds calcium, probably due to a conformational change which renders the GBA motif inaccessible. O-glycosylated. In terms of tissue distribution, expressed both in fetal and adult heart, lung, liver, kidney and brain, and in adult skeletal muscle, placenta and pancreas.

The protein localises to the golgi apparatus. Its subcellular location is the cis-Golgi network membrane. The protein resides in the cytoplasm. It is found in the secreted. Major calcium-binding protein of the Golgi which may have a role in calcium homeostasis. Acts as a non-receptor guanine nucleotide exchange factor which binds to and activates alpha subunits of guanine nucleotide-binding proteins (G proteins). This is Nucleobindin-1 (NUCB1) from Homo sapiens (Human).